A 157-amino-acid polypeptide reads, in one-letter code: Frd operon probable iron-sulfur subunit A (157 aa).

4Fe-4S ferredoxin-type domains follow at residues 24 to 55, 56 to 85, and 100 to 133; these read KGFS…IHNK, DYYY…VVSR, and FKAE…CIDR. [4Fe-4S] cluster-binding residues include Cys34, Cys37, Cys42, Cys46, Cys65, Cys68, Cys71, Cys75, Cys107, Cys110, Cys119, and Cys123.

This Proteus vulgaris protein is Frd operon probable iron-sulfur subunit A.